A 219-amino-acid polypeptide reads, in one-letter code: Ribose-5-phosphate isomerase A (219 aa).

Residues 28 to 31 (TGST), 81 to 84 (DGAD), and 94 to 97 (KGGG) contribute to the substrate site. E103 functions as the Proton acceptor in the catalytic mechanism. Residue K121 coordinates substrate.

Belongs to the ribose 5-phosphate isomerase family. Homodimer.

The enzyme catalyses aldehydo-D-ribose 5-phosphate = D-ribulose 5-phosphate. It participates in carbohydrate degradation; pentose phosphate pathway; D-ribose 5-phosphate from D-ribulose 5-phosphate (non-oxidative stage): step 1/1. Its function is as follows. Catalyzes the reversible conversion of ribose-5-phosphate to ribulose 5-phosphate. This Shewanella oneidensis (strain ATCC 700550 / JCM 31522 / CIP 106686 / LMG 19005 / NCIMB 14063 / MR-1) protein is Ribose-5-phosphate isomerase A.